The chain runs to 505 residues: Retinoic acid receptor gamma (505 aa).

Disordered stretches follow at residues 1 to 57 (MMKF…SSKD) and 113 to 134 (SLSVETQSTSSEEMVPSSPSPP). Composition is skewed to basic and acidic residues over residues 12–22 (DGGERPEEEGK) and 32–46 (MGKEEFTGSVGKEEA). Residues 52–142 (MSSSKDRICS…PPPPPRVYKP (91 aa)) are modulating. Positions 115–124 (SVETQSTSSE) are enriched in polar residues. NR C4-type zinc fingers lie at residues 143 to 163 (CFVCNDKSSGYHYGVSSCEGC) and 179 to 203 (CHRDKNCQINKVTRNRCQYCRLQKC). The segment at residues 143–208 (CFVCNDKSSG…RLQKCFEVGM (66 aa)) is a DNA-binding region (nuclear receptor). A hinge region spans residues 209–237 (SKEAVRNDRNKKKKEIKEEVVTDSYEMPP). One can recognise an NR LBD domain in the interval 238–472 (EMEALIQKVS…PLIREMLENP (235 aa)). Residues 462-505 (PPLIREMLENPEAFEDDASPPPKSEQKPIKVEEKPGEKTSTKDP) are disordered. Residues 485–505 (SEQKPIKVEEKPGEKTSTKDP) are compositionally biased toward basic and acidic residues.

This sequence belongs to the nuclear hormone receptor family. NR1 subfamily. As to quaternary structure, heterodimer; with a RXR molecule. Binds DNA preferentially as a RAR/RXR heterodimer. Isoform Delta-1A and Isoform Delta-1B are most abundant in regenerating limbs, tails, and the anterior half of the lower jaw. Isoform Delta-2 is broadly and uniformly distributed.

Its subcellular location is the nucleus. Its function is as follows. Receptor for retinoic acid. Retinoic acid receptors bind as heterodimers to their target response elements in response to their ligands, all-trans or 9-cis retinoic acid, and regulate gene expression in various biological processes. The RAR/RXR heterodimers bind to the retinoic acid response elements (RARE) composed of tandem 5'-AGGTCA-3' sites known as DR1-DR5. This Notophthalmus viridescens (Eastern newt) protein is Retinoic acid receptor gamma (RARG).